The primary structure comprises 151 residues: MFGGAHELSIDSKGRLAVPAKFRDILSRLYTPAVVVTLESKHKLLMYPVAEWEKVAAQLLNLKVADNPVLRRFQNLLLHNAEILEWDSAGRVLVPAGLRKRVDFDREVVLVGRANRLELWGREQWEAEMVQALDDDPDELAFQLGQTDLQL.

2 SpoVT-AbrB domains span residues 5-51 and 81-124; these read AHEL…PVAE and AEIL…GREQ.

This sequence belongs to the MraZ family. Forms oligomers.

It is found in the cytoplasm. Its subcellular location is the nucleoid. The protein is Transcriptional regulator MraZ of Neisseria meningitidis serogroup A / serotype 4A (strain DSM 15465 / Z2491).